We begin with the raw amino-acid sequence, 560 residues long: Eukaryotic translation initiation factor 3 subunit D-1 (560 aa).

Residues 98–166 are disordered; that stretch reads VQKPPHQRGR…RGPPPKMRES (69 aa). The segment covering 100 to 121 has biased composition (basic residues); the sequence is KPPHQRGRFRNMRNSRSGRGRN. The residue at position 128 (Thr128) is a Phosphothreonine. The span at 147–156 shows a compositional bias: basic residues; sequence GRGMGKKFGH. Residues 291-305 are RNA gate; sequence EFDLLTVNESSVEPP.

The protein belongs to the eIF-3 subunit D family. In terms of assembly, component of the eukaryotic translation initiation factor 3 (eIF-3) complex. The eIF-3 complex interacts with pix.

Its subcellular location is the cytoplasm. Functionally, mRNA cap-binding component of the eukaryotic translation initiation factor 3 (eIF-3) complex, which is involved in protein synthesis of a specialized repertoire of mRNAs and, together with other initiation factors, stimulates binding of mRNA and methionyl-tRNAi to the 40S ribosome. The eIF-3 complex specifically targets and initiates translation of a subset of mRNAs involved in cell proliferation. In the eIF-3 complex, eif3d specifically recognizes and binds the 7-methylguanosine cap of a subset of mRNAs. This chain is Eukaryotic translation initiation factor 3 subunit D-1, found in Drosophila simulans (Fruit fly).